A 239-amino-acid polypeptide reads, in one-letter code: Phosducin-like protein 3 (239 aa).

Met1 carries the N-acetylmethionine modification. Residues 32-180 form the Phosducin domain; sequence EAEEEQRILQ…EGDIKAQFIG (149 aa). Phosphoserine is present on residues Ser43, Ser234, and Ser236. Residues 91-239 are thioredoxin fold; the sequence is FGEVLEISGK…MKRDSDSEGD (149 aa).

Belongs to the phosducin family. In terms of assembly, interacts (via thioredoxin fold region) with KDR/VEGFR2 (via juxtamembrane domain). Forms ternary complexes with the chaperonin CCT complex and actin substrate, leading to inhibition of actin folding. Interacts with XIAP (via BIR 3 and RING domain). Interacts with HSP90AA1 and HSP90AB1. In terms of processing, N-terminal methionine acetylation destabilizes the protein.

The protein resides in the cytoplasm. The protein localises to the perinuclear region. It localises to the endoplasmic reticulum. Its function is as follows. Acts as a chaperone for the angiogenic VEGF receptor KDR/VEGFR2, increasing its abundance by inhibiting its ubiquitination and degradation. Inhibits the folding activity of the chaperonin-containing T-complex (CCT) which leads to inhibition of cytoskeletal actin folding. Acts as a chaperone during heat shock alongside HSP90 and HSP40/70 chaperone complexes. Modulates the activation of caspases during apoptosis. The protein is Phosducin-like protein 3 (PDCL3) of Pongo abelii (Sumatran orangutan).